We begin with the raw amino-acid sequence, 190 residues long: Histone-arginine methyltransferase METTL23 (190 aa).

Belongs to the methyltransferase superfamily. METTL23 family. As to quaternary structure, interacts with HSPA5, HSP90B1, TUBULIN, UGGT1 and UGGT2. Interacts with TET3. Interacts with STPG4.

It localises to the nucleus. The protein resides in the cytoplasm. The enzyme catalyses L-arginyl-[protein] + 2 S-adenosyl-L-methionine = N(omega),N(omega)-dimethyl-L-arginyl-[protein] + 2 S-adenosyl-L-homocysteine + 2 H(+). Functionally, histone methyltransferase that dimethylates histone H3 at 'Arg-17', forming asymmetric dimethylarginine (H3R17me2a), leading to activate transcription via chromatin remodeling. Maternal factor involved in epigenetic chromatin reprogramming of the paternal genome in the zygote: mediates H3R17me2a, promoting histone H3.3 incorporation in the male pronucleus, leading to TET3 recruitment and subsequent DNA demethylation. The polypeptide is Histone-arginine methyltransferase METTL23 (Homo sapiens (Human)).